We begin with the raw amino-acid sequence, 115 residues long: Large ribosomal subunit protein P2 (115 aa).

M1 is subject to N-acetylmethionine. At S19 the chain carries Phosphoserine. Residue K21 is modified to N6-acetyllysine; alternate. K21 bears the N6-succinyllysine; alternate mark. The segment covering 76 to 90 (APGSAAPAAGSAPAA) has biased composition (low complexity). A disordered region spans residues 76–115 (APGSAAPAAGSAPAAAEEKKDEKKEESEESDDDMGFGLFD). A phosphoserine mark is found at S79 and S86. Basic and acidic residues predominate over residues 91 to 101 (AEEKKDEKKEE). 2 positions are modified to phosphoserine: S102 and S105.

Belongs to the eukaryotic ribosomal protein P1/P2 family. As to quaternary structure, heterodimer with RPLP1 at the lateral ribosomal stalk of the large ribosomal subunit.

Functionally, plays an important role in the elongation step of protein synthesis. The polypeptide is Large ribosomal subunit protein P2 (Rplp2) (Rattus norvegicus (Rat)).